Reading from the N-terminus, the 316-residue chain is CXXC-type zinc finger protein 5 (316 aa).

The segment covering 1–10 (MSSLGGGSQD) has biased composition (gly residues). The tract at residues 1–95 (MSSLGGGSQD…SGGAGSMMGG (95 aa)) is disordered. Low complexity-rich tracts occupy residues 11–27 (AGGS…SGSG) and 36–50 (SATV…VADD). The CXXC-type zinc-finger motif lies at 250 to 291 (GKKKRKRCGMCAPCRRRINCEQCSSCRNRKTGHQICKFRKCE). Positions 251–256 (KKKRKR) match the Nuclear localization signal motif. Positions 257, 260, 263, 269, 272, 275, 285, and 290 each coordinate Zn(2+).

Interacts with DVL1. Interacts with RBPJ. In terms of tissue distribution, expressed in neural stem cells (at protein level). Expressed in the dorsal telencephalon.

It is found in the nucleus. It localises to the cytoplasm. Its function is as follows. May indirectly participate in activation of the NF-kappa-B and MAPK pathways. Required for DNA damage-induced ATM phosphorylation, p53 activation and cell cycle arrest. Involved in myelopoiesis. Acts as a mediator of BMP4-mediated modulation of canonical Wnt signaling activity in neural stem cells. Binds to the oxygen responsive element of COX4I2 and represses its transcription under hypoxia conditions (4% oxygen), as well as normoxia conditions (20% oxygen). May repress COX4I2 transactivation induced by CHCHD2 and RBPJ. Binds preferentially to DNA containing cytidine-phosphate-guanosine (CpG) dinucleotides over CpH (H=A, T, and C), hemimethylated-CpG and hemimethylated-hydroxymethyl-CpG. This Rattus norvegicus (Rat) protein is CXXC-type zinc finger protein 5 (Cxxc5).